A 70-amino-acid polypeptide reads, in one-letter code: DNA gyrase inhibitor YacG (70 aa).

Cysteine 9, cysteine 12, cysteine 28, and cysteine 32 together coordinate Zn(2+). The tract at residues 44–70 is disordered; sequence SRKIPGSSIDPESIVTTNNKQDNVDEQ.

The protein belongs to the DNA gyrase inhibitor YacG family. As to quaternary structure, interacts with GyrB. Zn(2+) serves as cofactor.

Functionally, inhibits all the catalytic activities of DNA gyrase by preventing its interaction with DNA. Acts by binding directly to the C-terminal domain of GyrB, which probably disrupts DNA binding by the gyrase. The polypeptide is DNA gyrase inhibitor YacG (Legionella pneumophila subsp. pneumophila (strain Philadelphia 1 / ATCC 33152 / DSM 7513)).